The primary structure comprises 584 residues: Kelch domain-containing protein 4 (584 aa).

Residues 1–10 show a composition bias toward basic residues; it reads MGKKGKKEKK. Disordered stretches follow at residues 1–33 and 50–69; these read MGKKGKKEKKGRGAEKTAAKMEKKVSKRSRKEE and KTQVTETPCPPPSPRLNASL. Residues 11 to 24 show a composition bias toward basic and acidic residues; the sequence is GRGAEKTAAKMEKK. 5 Kelch repeats span residues 77–129, 133–187, 188–238, 243–289, and 308–361; these read ELIL…VVPQ, QLWV…AWKR, QLIL…LMAV, SIAI…INPS, and QILV…RRGK. Disordered stretches follow at residues 348–381, 405–433, and 482–533; these read KGPKSEKKKRRRGKAEDPEGTTEQETGGSSAPEP, SGLGVQPSPKADDSASEASSTGQEPCPRS, and PKSQ…EQFE. Ser-418 is subject to Phosphoserine. The stretch at 443–494 is one Kelch 6 repeat; it reads LLYVYGGMFEAGDRQVTLSDLYCLDLHKMEEWKTLVEMDPKSQEWLEESDSE. Positions 487–519 are enriched in acidic residues; that stretch reads WLEESDSEEDSSSDEESEDGEDKDQEDSAEEGA. Residues 520–533 show a composition bias toward basic and acidic residues; sequence DPQHPEVARGEQFE.

In Mus musculus (Mouse), this protein is Kelch domain-containing protein 4 (Klhdc4).